Reading from the N-terminus, the 155-residue chain is MAIEKTDNLLTVFKDLLSQERFGSQSEIVSALQDLGFSNINQSKVSRMLTKFGAIRTRNTRMEMVYCLPNELSVPNTSSPLKNLVLDIDHNDFLIVIKTSPGAAQLIARLLDSVGKTEGILGTIAGDDTIFITPTKGTGIKELINTIQQLFENSL.

Belongs to the ArgR family.

The protein resides in the cytoplasm. The protein operates within amino-acid biosynthesis; L-arginine biosynthesis [regulation]. Its function is as follows. Regulates arginine biosynthesis genes. The protein is Arginine repressor of Mannheimia succiniciproducens (strain KCTC 0769BP / MBEL55E).